Consider the following 109-residue polypeptide: MKFTRVCDRRDVPEGEALKVESGGTSVAIFNVDGELFATQDRCTHGDWSLSDGGYLEGDVVECSLHMGKFCVRTGKVKSPPPCEALKIFPIRIEDNDVLVDFEAGYLAP.

The region spanning 4 to 100 (TRVCDRRDVP…IRIEDNDVLV (97 aa)) is the Rieske domain. [2Fe-2S] cluster-binding residues include cysteine 43, histidine 45, cysteine 63, and histidine 66.

The protein belongs to the bacterial ring-hydroxylating dioxygenase ferredoxin component family. As to quaternary structure, this dioxygenase system consists of four proteins: the two subunits of the hydroxylase component (BphA and BphE), a ferredoxin (BphF) and a ferredoxin reductase (BphG).

In terms of biological role, this protein seems to be a 2Fe-2S ferredoxin. This chain is Biphenyl dioxygenase system ferredoxin subunit (bphF), found in Paraburkholderia xenovorans (strain LB400).